Here is a 254-residue protein sequence, read N- to C-terminus: Triosephosphate isomerase (254 aa).

Residue 9-11 coordinates substrate; sequence NWK. Catalysis depends on H98, which acts as the Electrophile. Residue E170 is the Proton acceptor of the active site. Substrate contacts are provided by residues G176, S215, and 236–237; that span reads GG.

It belongs to the triosephosphate isomerase family. In terms of assembly, homodimer.

It is found in the cytoplasm. It carries out the reaction D-glyceraldehyde 3-phosphate = dihydroxyacetone phosphate. It functions in the pathway carbohydrate biosynthesis; gluconeogenesis. It participates in carbohydrate degradation; glycolysis; D-glyceraldehyde 3-phosphate from glycerone phosphate: step 1/1. Functionally, involved in the gluconeogenesis. Catalyzes stereospecifically the conversion of dihydroxyacetone phosphate (DHAP) to D-glyceraldehyde-3-phosphate (G3P). The protein is Triosephosphate isomerase of Buchnera aphidicola subsp. Cinara cedri (strain Cc).